The sequence spans 279 residues: Putative carbamate hydrolase RutD (279 aa).

The AB hydrolase-1 domain maps to 23-126 (PVVVLISGLG…LVSVNGWLRI (104 aa)).

The protein belongs to the AB hydrolase superfamily. Hydrolase RutD family.

The catalysed reaction is carbamate + 2 H(+) = NH4(+) + CO2. Its function is as follows. Involved in pyrimidine catabolism. May facilitate the hydrolysis of carbamate, a reaction that can also occur spontaneously. This is Putative carbamate hydrolase RutD from Escherichia coli O17:K52:H18 (strain UMN026 / ExPEC).